The chain runs to 283 residues: Protease HtpX (283 aa).

A run of 2 helical transmembrane segments spans residues 4–24 (ILLFLATNMAVMLVLGIILNV) and 33–53 (GGILIMALLFGFAGSLISLFL). Histidine 139 contacts Zn(2+). Glutamate 140 is a catalytic residue. Histidine 143 lines the Zn(2+) pocket. The next 2 membrane-spanning stretches (helical) occupy residues 147-167 (GDMVTMALLQGVLNTFVIFLS) and 190-210 (IYFLVSMVLEMLFGVLASIIA). Residue glutamate 218 coordinates Zn(2+).

Belongs to the peptidase M48B family. Zn(2+) is required as a cofactor.

The protein localises to the cell inner membrane. The polypeptide is Protease HtpX (Haemophilus influenzae (strain 86-028NP)).